The sequence spans 489 residues: Protein pbn1 (489 aa).

Residues 1 to 448 (MRRRITFVQR…FQSKTIELGT (448 aa)) are Lumenal-facing. Asparagine 346 carries N-linked (GlcNAc...) asparagine glycosylation. A helical membrane pass occupies residues 449 to 469 (VVVVGLGLLWVLWKLGLVLWI). The Cytoplasmic segment spans residues 470-489 (AGTGRSTRAQKRTDKHRKAE).

This sequence belongs to the PIGX family.

The protein localises to the endoplasmic reticulum membrane. It participates in glycolipid biosynthesis; glycosylphosphatidylinositol-anchor biosynthesis. Functionally, required for proper folding and/or the stability of a subset of proteins in the endoplasmic reticulum. Component of glycosylphosphatidylinositol-mannosyltransferase 1 which transfers the first of the 4 mannoses in the GPI-anchor precursors during GPI-anchor biosynthesis. Probably acts by stabilizing the mannosyltransferase gpi14. The polypeptide is Protein pbn1 (pbn1) (Aspergillus fumigatus (strain ATCC MYA-4609 / CBS 101355 / FGSC A1100 / Af293) (Neosartorya fumigata)).